Here is a 585-residue protein sequence, read N- to C-terminus: Putative sulfur deprivation response regulator (585 aa).

5 helical membrane-spanning segments follow: residues 5 to 25 (VVDA…RGII), 30 to 50 (AFAG…MIAA), 83 to 103 (VASV…IPVV), 117 to 137 (FMMP…IGTS), and 162 to 182 (IIGL…SPLL). RCK C-terminal domains are found at residues 189-274 (MMAA…LPGL) and 288-372 (ETVA…STEW). The next 5 membrane-spanning stretches (helical) occupy residues 389 to 409 (LALF…SMDV), 411 to 431 (PLST…VLTV), 442 to 462 (ILLT…TGLA), 482 to 502 (VAAI…GAAV), and 561 to 581 (FGLP…VLYF).

Belongs to the CitM (TC 2.A.11) transporter family.

The protein resides in the membrane. Its function is as follows. Not known; mutations in SAC1 produces cells that cannot synthesize arylsulfatase and cannot take up sulfate as rapidly as wild-type cells. SAC1 is necessary for cells to survive sulfur deprivation. In Chlamydomonas reinhardtii (Chlamydomonas smithii), this protein is Putative sulfur deprivation response regulator (SAC1).